Consider the following 210-residue polypeptide: N-(5'-phosphoribosyl)anthranilate isomerase (210 aa).

It belongs to the TrpF family.

It catalyses the reaction N-(5-phospho-beta-D-ribosyl)anthranilate = 1-(2-carboxyphenylamino)-1-deoxy-D-ribulose 5-phosphate. It participates in amino-acid biosynthesis; L-tryptophan biosynthesis; L-tryptophan from chorismate: step 3/5. This chain is N-(5'-phosphoribosyl)anthranilate isomerase, found in Trichormus variabilis (strain ATCC 29413 / PCC 7937) (Anabaena variabilis).